The chain runs to 301 residues: 5'-adenylylsulfate reductase-like 5 (301 aa).

The N-terminal stretch at 1–21 (MTRCAVVAAVAAVLLVAGAAA) is a signal peptide. A Thioredoxin domain is found at 51-164 (CIRIEPSPPV…LVDFYKETTG (114 aa)). N139 is a glycosylation site (N-linked (GlcNAc...) asparagine). A helical membrane pass occupies residues 201–221 (FVLLAVLFIILKVAAHFVPIV). N268 carries N-linked (GlcNAc...) asparagine glycosylation.

It is found in the membrane. The polypeptide is 5'-adenylylsulfate reductase-like 5 (APRL5) (Oryza sativa subsp. japonica (Rice)).